A 381-amino-acid polypeptide reads, in one-letter code: Arginine biosynthesis bifunctional protein ArgJ (381 aa).

Substrate-binding residues include threonine 143, lysine 165, threonine 176, glutamate 255, asparagine 376, and threonine 381. Threonine 176 serves as the catalytic Nucleophile.

The protein belongs to the ArgJ family. In terms of assembly, heterotetramer of two alpha and two beta chains.

The protein localises to the cytoplasm. The catalysed reaction is N(2)-acetyl-L-ornithine + L-glutamate = N-acetyl-L-glutamate + L-ornithine. It catalyses the reaction L-glutamate + acetyl-CoA = N-acetyl-L-glutamate + CoA + H(+). The protein operates within amino-acid biosynthesis; L-arginine biosynthesis; L-ornithine and N-acetyl-L-glutamate from L-glutamate and N(2)-acetyl-L-ornithine (cyclic): step 1/1. Its pathway is amino-acid biosynthesis; L-arginine biosynthesis; N(2)-acetyl-L-ornithine from L-glutamate: step 1/4. Functionally, catalyzes two activities which are involved in the cyclic version of arginine biosynthesis: the synthesis of N-acetylglutamate from glutamate and acetyl-CoA as the acetyl donor, and of ornithine by transacetylation between N(2)-acetylornithine and glutamate. The polypeptide is Arginine biosynthesis bifunctional protein ArgJ (Thermus thermophilus (strain ATCC BAA-163 / DSM 7039 / HB27)).